The sequence spans 240 residues: Ubiquinone biosynthesis O-methyltransferase (240 aa).

4 residues coordinate S-adenosyl-L-methionine: arginine 44, glycine 64, aspartate 85, and methionine 129.

This sequence belongs to the methyltransferase superfamily. UbiG/COQ3 family.

The catalysed reaction is a 3-demethylubiquinol + S-adenosyl-L-methionine = a ubiquinol + S-adenosyl-L-homocysteine + H(+). The enzyme catalyses a 3-(all-trans-polyprenyl)benzene-1,2-diol + S-adenosyl-L-methionine = a 2-methoxy-6-(all-trans-polyprenyl)phenol + S-adenosyl-L-homocysteine + H(+). Its pathway is cofactor biosynthesis; ubiquinone biosynthesis. O-methyltransferase that catalyzes the 2 O-methylation steps in the ubiquinone biosynthetic pathway. The polypeptide is Ubiquinone biosynthesis O-methyltransferase (Escherichia coli O6:H1 (strain CFT073 / ATCC 700928 / UPEC)).